The primary structure comprises 138 residues: Actophorin (138 aa).

Residues 3-134 form the ADF-H domain; it reads GIQLADEVTS…NLDEVIAKVK (132 aa).

Belongs to the actin-binding proteins ADF family. As to quaternary structure, interacts with F-actin. Does not interact with G-actin. Interacts with 14-3-3 protein 3.

The protein localises to the cytoplasm. It is found in the cytoskeleton. Its subcellular location is the cell membrane. The protein resides in the cell projection. It localises to the phagocytic cup. The protein localises to the pseudopodium. Functionally, actin-binding protein that severs actin filaments. This chain is Actophorin, found in Entamoeba histolytica (strain ATCC 30459 / HM-1:IMSS / ABRM).